The chain runs to 431 residues: MRIVDINERLAISGQPNTDEFINFARRGYRSIINLRPDGEEPNQPGNDAEQAAARRAGLAYNFVPVIGTSITEADIQAFQRAIATTEGSVLVHCKSGTRALMLYALSEVIDGRMKRDEVEALGHAHGFDLGRAVTWLERQAIQTPRVSGFFDPRTSSIQYVVTDQTTKRCAIIDPVLDFDEKSGATATTNADAILAHVEQQGLTVEWILDTHPHADHFSAAQYLKQRTGAPTAIGTHVTEVQRLWREIYNWPTLSANGSQWDHLFADGDVFNVGSIKGRVMFSPGHTLASVTYVIGDTAFVHDTIFMPDAGTARADFPGGSARALWSSIQTILSLPDETRLFTGHDYQPSGRHPRWESTVGEQKKANPHLAGVDETTFVALREARDKTLPMPKLILHALQVNVLGGRLPEPETNGRRYLKFPLNALEGAAW.

Zn(2+)-binding residues include His-212, His-214, and His-286. Asp-309 is a binding site for substrate.

The protein belongs to the metallo-beta-lactamase superfamily. Zn(2+) serves as cofactor.

Could play a role in cell adherence or biofilm development. The polypeptide is Beta-lactamase hydrolase-like protein (Xylella fastidiosa (strain 9a5c)).